The primary structure comprises 412 residues: Argininosuccinate synthase (412 aa).

ATP-binding positions include 10–18 and A36; that span reads AYSGGLDTS. Y87 and S92 together coordinate L-citrulline. 115–123 lines the ATP pocket; it reads SHGATGKGN. Positions 119, 123, and 124 each coordinate L-aspartate. N123 lines the L-citrulline pocket. 5 residues coordinate L-citrulline: R127, S180, S189, E270, and Y282.

It belongs to the argininosuccinate synthase family. In terms of assembly, homotetramer.

The enzyme catalyses L-citrulline + L-aspartate + ATP = 2-(N(omega)-L-arginino)succinate + AMP + diphosphate + H(+). The protein operates within amino-acid biosynthesis; L-arginine biosynthesis; L-arginine from L-ornithine and carbamoyl phosphate: step 2/3. It functions in the pathway nitrogen metabolism; urea cycle; (N(omega)-L-arginino)succinate from L-aspartate and L-citrulline: step 1/1. In Aedes aegypti (Yellowfever mosquito), this protein is Argininosuccinate synthase.